A 344-amino-acid polypeptide reads, in one-letter code: MITQRQNDILNLIVELFTQTHEPVGSKALQRTIDSSSATIRNDMAKLEKLGLLEKAHTSSGRMPSPAGFKYFVEHSLRLDSIDEQDIYHVIKAFDFEAFKLEDMLQKASHILAEMTGYTSVILDVEPARQRLTGFDVVQLSNHDALAVMTLDESKPVTVQFAIPRNFLTRDLIAFKAIVEERLLDNSVIDIHYKLRTEIPQIVQKYFVTTDNVLQLFDYVFSELFLETVFVAGKVNSLTYSDLSTYQFLDNEQQVAISLRQSLKEGEMASVQVADSQEAALADVSVLTHKFLIPYRGFGLLSLIGPIDMDYRRSVSLVNIIGKVLAAKLGDYYRYLNSNHYEVH.

The protein belongs to the HrcA family.

Functionally, negative regulator of class I heat shock genes (grpE-dnaK-dnaJ and groELS operons). Prevents heat-shock induction of these operons. This is Heat-inducible transcription repressor HrcA from Streptococcus pyogenes serotype M1.